Consider the following 312-residue polypeptide: Methionyl-tRNA formyltransferase (312 aa).

A (6S)-5,6,7,8-tetrahydrofolate-binding site is contributed by 112–115 (SLLP).

This sequence belongs to the Fmt family.

It catalyses the reaction L-methionyl-tRNA(fMet) + (6R)-10-formyltetrahydrofolate = N-formyl-L-methionyl-tRNA(fMet) + (6S)-5,6,7,8-tetrahydrofolate + H(+). In terms of biological role, attaches a formyl group to the free amino group of methionyl-tRNA(fMet). The formyl group appears to play a dual role in the initiator identity of N-formylmethionyl-tRNA by promoting its recognition by IF2 and preventing the misappropriation of this tRNA by the elongation apparatus. This chain is Methionyl-tRNA formyltransferase, found in Dehalococcoides mccartyi (strain ATCC BAA-2266 / KCTC 15142 / 195) (Dehalococcoides ethenogenes (strain 195)).